We begin with the raw amino-acid sequence, 291 residues long: ATP synthase gamma chain (291 aa).

This sequence belongs to the ATPase gamma chain family. F-type ATPases have 2 components, CF(1) - the catalytic core - and CF(0) - the membrane proton channel. CF(1) has five subunits: alpha(3), beta(3), gamma(1), delta(1), epsilon(1). CF(0) has three main subunits: a, b and c.

Its subcellular location is the cell inner membrane. Functionally, produces ATP from ADP in the presence of a proton gradient across the membrane. The gamma chain is believed to be important in regulating ATPase activity and the flow of protons through the CF(0) complex. This chain is ATP synthase gamma chain, found in Ruegeria pomeroyi (strain ATCC 700808 / DSM 15171 / DSS-3) (Silicibacter pomeroyi).